Reading from the N-terminus, the 837-residue chain is SLIT and NTRK-like protein 4 (837 aa).

An N-terminal signal peptide occupies residues 1–18 (MFLWLFLIVSALISSTNA). The Extracellular portion of the chain corresponds to 19–618 (DSDISVEICN…SPPGGPVPLS (600 aa)). 6 LRR repeats span residues 60-81 (NFYHLNFQNNFLNILYPNTFVN), 84-105 (HAVSLHLGNNKLQNIEGGAFLG), 108-129 (ALKQLHLNNNELKILRADTFLG), 132-153 (NLEYLQADYNLIKYIERGAFNK), 156-177 (KLKVLILNDNLISFLPDNIFRF), and 179-200 (SLTHLDIRGNRIQKLPYIGVLE). Asn-81 carries an N-linked (GlcNAc...) asparagine glycan. In terms of domain architecture, LRRCT 1 spans 213-264 (NPWNCSCDLLPLKAWLENMPYNIYIGEAICETPSDLYGRLLKETNKQELCPM). N-linked (GlcNAc...) asparagine glycosylation is present at Asn-325. One can recognise an LRRNT domain in the interval 333 to 375 (QTRVPPLTPCPVPCFCKTHPSDLGLSVNCQEKNIQSMSELTPK). LRR repeat units follow at residues 378-399 (NAKKLHVNGNNIKDVDISDFTE), 402-423 (GLDLLHLGSNQITLIKGEVFHN), 426-447 (NLRRLYLNGNQIERLYPEIFSG), 450-471 (NLQYLYLEYNLIKEILAGTFDS), 474-495 (NLQLLYLNNNLLKSLPVYIFSG), and 497-518 (PLARLNLRNNKFMYLPVSGVLD). Residue Asn-423 is glycosylated (N-linked (GlcNAc...) asparagine). One can recognise an LRRCT 2 domain in the interval 531 to 582 (NPWDCTCDLVALKLWLEKLNDGIVVKELKCETPVQFANIELKSLKNEILCPK). Residues 619 to 639 (ILILSILVVLILTVFVAFCLL) traverse the membrane as a helical segment. Residues 640-837 (VFVLRRNKKP…LEEQTALNKI (198 aa)) are Cytoplasmic-facing.

Belongs to the SLITRK family. Interacts (via LRR 1 and 2 repeats) with PTPRD (via extracellular domain). In the adult, significant expression is detected only in the brain. Broadly expressed in embryonic brain with highest expression in subventricular zone, subplate, cortical plate, pyramidal cell layer of hippocampus, thalamus and hypothalamus.

The protein localises to the membrane. The protein resides in the cell membrane. In terms of biological role, it is involved in synaptogenesis and promotes synapse differentiation. Suppresses neurite outgrowth. The chain is SLIT and NTRK-like protein 4 (Slitrk4) from Mus musculus (Mouse).